The primary structure comprises 284 residues: Pantothenate synthetase (284 aa).

30 to 37 lines the ATP pocket; that stretch reads MGFLHEGH. Residue histidine 37 is the Proton donor of the active site. Glutamine 61 provides a ligand contact to (R)-pantoate. Glutamine 61 lines the beta-alanine pocket. 147–150 is a binding site for ATP; it reads GRKD. Glutamine 153 is a (R)-pantoate binding site. Residues valine 176 and 184–187 contribute to the ATP site; that span reads MSSR.

It belongs to the pantothenate synthetase family. As to quaternary structure, homodimer.

The protein resides in the cytoplasm. The catalysed reaction is (R)-pantoate + beta-alanine + ATP = (R)-pantothenate + AMP + diphosphate + H(+). The protein operates within cofactor biosynthesis; (R)-pantothenate biosynthesis; (R)-pantothenate from (R)-pantoate and beta-alanine: step 1/1. Functionally, catalyzes the condensation of pantoate with beta-alanine in an ATP-dependent reaction via a pantoyl-adenylate intermediate. The polypeptide is Pantothenate synthetase (Pelobacter propionicus (strain DSM 2379 / NBRC 103807 / OttBd1)).